A 282-amino-acid chain; its full sequence is NADPH-dependent 7-cyano-7-deazaguanine reductase (282 aa).

88–90 (IES) lines the substrate pocket. 90–91 (SK) contacts NADPH. The active-site Thioimide intermediate is the cysteine 190. Aspartate 197 (proton donor) is an active-site residue. Residue 229–230 (HE) coordinates substrate. Residue 258–259 (RG) coordinates NADPH.

This sequence belongs to the GTP cyclohydrolase I family. QueF type 2 subfamily. In terms of assembly, homodimer.

It localises to the cytoplasm. The enzyme catalyses 7-aminomethyl-7-carbaguanine + 2 NADP(+) = 7-cyano-7-deazaguanine + 2 NADPH + 3 H(+). The protein operates within tRNA modification; tRNA-queuosine biosynthesis. Catalyzes the NADPH-dependent reduction of 7-cyano-7-deazaguanine (preQ0) to 7-aminomethyl-7-deazaguanine (preQ1). This Pectobacterium carotovorum subsp. carotovorum (strain PC1) protein is NADPH-dependent 7-cyano-7-deazaguanine reductase.